The sequence spans 143 residues: Large ribosomal subunit protein uL16 (143 aa).

The protein belongs to the universal ribosomal protein uL16 family. Part of the 50S ribosomal subunit.

Binds 23S rRNA and is also seen to make contacts with the A and possibly P site tRNAs. The protein is Large ribosomal subunit protein uL16 of Fusobacterium nucleatum subsp. nucleatum (strain ATCC 25586 / DSM 15643 / BCRC 10681 / CIP 101130 / JCM 8532 / KCTC 2640 / LMG 13131 / VPI 4355).